A 372-amino-acid polypeptide reads, in one-letter code: 4-hydroxy-3-methylbut-2-en-1-yl diphosphate synthase (flavodoxin) (372 aa).

Positions 270, 273, 305, and 312 each coordinate [4Fe-4S] cluster.

This sequence belongs to the IspG family. It depends on [4Fe-4S] cluster as a cofactor.

The catalysed reaction is (2E)-4-hydroxy-3-methylbut-2-enyl diphosphate + oxidized [flavodoxin] + H2O + 2 H(+) = 2-C-methyl-D-erythritol 2,4-cyclic diphosphate + reduced [flavodoxin]. It participates in isoprenoid biosynthesis; isopentenyl diphosphate biosynthesis via DXP pathway; isopentenyl diphosphate from 1-deoxy-D-xylulose 5-phosphate: step 5/6. Converts 2C-methyl-D-erythritol 2,4-cyclodiphosphate (ME-2,4cPP) into 1-hydroxy-2-methyl-2-(E)-butenyl 4-diphosphate. This chain is 4-hydroxy-3-methylbut-2-en-1-yl diphosphate synthase (flavodoxin), found in Aliivibrio salmonicida (strain LFI1238) (Vibrio salmonicida (strain LFI1238)).